Consider the following 474-residue polypeptide: tRNA-2-methylthio-N(6)-dimethylallyladenosine synthase (474 aa).

Positions 3–120 (QKLHIKTWGC…LPEMINQIRG (118 aa)) constitute an MTTase N-terminal domain. 6 residues coordinate [4Fe-4S] cluster: Cys-12, Cys-49, Cys-83, Cys-157, Cys-161, and Cys-164. The region spanning 143–375 (RAEGPTAFVS…QERINQQAAQ (233 aa)) is the Radical SAM core domain. The region spanning 378–441 (RRMLGTEQRV…TNSLRGEVVR (64 aa)) is the TRAM domain.

Belongs to the methylthiotransferase family. MiaB subfamily. Monomer. [4Fe-4S] cluster serves as cofactor.

It is found in the cytoplasm. The catalysed reaction is N(6)-dimethylallyladenosine(37) in tRNA + (sulfur carrier)-SH + AH2 + 2 S-adenosyl-L-methionine = 2-methylsulfanyl-N(6)-dimethylallyladenosine(37) in tRNA + (sulfur carrier)-H + 5'-deoxyadenosine + L-methionine + A + S-adenosyl-L-homocysteine + 2 H(+). Catalyzes the methylthiolation of N6-(dimethylallyl)adenosine (i(6)A), leading to the formation of 2-methylthio-N6-(dimethylallyl)adenosine (ms(2)i(6)A) at position 37 in tRNAs that read codons beginning with uridine. The chain is tRNA-2-methylthio-N(6)-dimethylallyladenosine synthase from Haemophilus influenzae (strain PittEE).